We begin with the raw amino-acid sequence, 541 residues long: Threonine--tRNA ligase catalytic subunit (541 aa).

Residues Asp-135–Pro-429 are catalytic. Cys-227, His-278, and His-406 together coordinate Zn(2+).

The protein belongs to the class-II aminoacyl-tRNA synthetase family. As to quaternary structure, homodimer. Probably interacts with its editing subunit. It depends on Zn(2+) as a cofactor.

It is found in the cytoplasm. It catalyses the reaction tRNA(Thr) + L-threonine + ATP = L-threonyl-tRNA(Thr) + AMP + diphosphate + H(+). Functionally, catalyzes the attachment of threonine to tRNA(Thr) in a two-step reaction: L-threonine is first activated by ATP to form Thr-AMP and then transferred to the acceptor end of tRNA(Thr). Also activates L-serine and transfers it to tRNA(Thr) but cannot deacylate incorrectly charged amino acid; unlike most archaea the editing function is found in a freestanding protein. This Metallosphaera sedula (strain ATCC 51363 / DSM 5348 / JCM 9185 / NBRC 15509 / TH2) protein is Threonine--tRNA ligase catalytic subunit.